The sequence spans 133 residues: Methylglyoxal synthase (133 aa).

One can recognise an MGS-like domain in the interval 1–133 (MPPKPRIALI…ARENGAAQAG (133 aa)). Substrate contacts are provided by residues histidine 12, lysine 16, 38-41 (TGTT), and 58-59 (SG). Aspartate 64 serves as the catalytic Proton donor/acceptor. Histidine 91 contributes to the substrate binding site.

This sequence belongs to the methylglyoxal synthase family.

The enzyme catalyses dihydroxyacetone phosphate = methylglyoxal + phosphate. In terms of biological role, catalyzes the formation of methylglyoxal from dihydroxyacetone phosphate. The polypeptide is Methylglyoxal synthase (Cupriavidus taiwanensis (strain DSM 17343 / BCRC 17206 / CCUG 44338 / CIP 107171 / LMG 19424 / R1) (Ralstonia taiwanensis (strain LMG 19424))).